We begin with the raw amino-acid sequence, 225 residues long: Superoxide dismutase [Mn], mitochondrial (225 aa).

The N-terminal 27 residues, 1 to 27 (MITAITRTALPRATLRTSLATMSTIRA), are a transit peptide targeting the mitochondrion. The Mn(2+) site is built by His53, His101, Asp187, and His191.

It belongs to the iron/manganese superoxide dismutase family. The cofactor is Mn(2+).

It is found in the mitochondrion. Its subcellular location is the cytoplasm. The catalysed reaction is 2 superoxide + 2 H(+) = H2O2 + O2. In terms of biological role, destroys radicals which are normally produced within the cells and which are toxic to biological systems. Functionally, destroys mitochondrial radicals produced by oxidative stress. Destroys cytoplasmic radicals produced in low copper environments; a condition which inactivates the cytoplasmic copper-dependent superoxide dismutase SOD1. This chain is Superoxide dismutase [Mn], mitochondrial, found in Cryptococcus neoformans var. grubii serotype A (strain H99 / ATCC 208821 / CBS 10515 / FGSC 9487) (Filobasidiella neoformans var. grubii).